The sequence spans 349 residues: Phosphoribosylformylglycinamidine cyclo-ligase (349 aa).

The protein belongs to the AIR synthase family.

The protein localises to the cytoplasm. The catalysed reaction is 2-formamido-N(1)-(5-O-phospho-beta-D-ribosyl)acetamidine + ATP = 5-amino-1-(5-phospho-beta-D-ribosyl)imidazole + ADP + phosphate + H(+). It participates in purine metabolism; IMP biosynthesis via de novo pathway; 5-amino-1-(5-phospho-D-ribosyl)imidazole from N(2)-formyl-N(1)-(5-phospho-D-ribosyl)glycinamide: step 2/2. The sequence is that of Phosphoribosylformylglycinamidine cyclo-ligase from Lawsonia intracellularis (strain PHE/MN1-00).